An 803-amino-acid polypeptide reads, in one-letter code: Lon protease (803 aa).

Residues 9–202 (MPVLPLRDVV…YLLGMMESEA (194 aa)) form the Lon N-terminal domain. 356–363 (GPPGVGKT) contributes to the ATP binding site. Residues 592 to 773 (QNRIGEVTGL…DEVLGFALEN (182 aa)) enclose the Lon proteolytic domain. Catalysis depends on residues Ser-679 and Lys-722.

The protein belongs to the peptidase S16 family. In terms of assembly, homohexamer. Organized in a ring with a central cavity.

It localises to the cytoplasm. The enzyme catalyses Hydrolysis of proteins in presence of ATP.. In terms of biological role, ATP-dependent serine protease that mediates the selective degradation of mutant and abnormal proteins as well as certain short-lived regulatory proteins. Required for cellular homeostasis and for survival from DNA damage and developmental changes induced by stress. Degrades polypeptides processively to yield small peptide fragments that are 5 to 10 amino acids long. Binds to DNA in a double-stranded, site-specific manner. The sequence is that of Lon protease from Haemophilus influenzae (strain ATCC 51907 / DSM 11121 / KW20 / Rd).